We begin with the raw amino-acid sequence, 83 residues long: Exodeoxyribonuclease 7 small subunit (83 aa).

This sequence belongs to the XseB family. In terms of assembly, heterooligomer composed of large and small subunits.

It localises to the cytoplasm. It catalyses the reaction Exonucleolytic cleavage in either 5'- to 3'- or 3'- to 5'-direction to yield nucleoside 5'-phosphates.. In terms of biological role, bidirectionally degrades single-stranded DNA into large acid-insoluble oligonucleotides, which are then degraded further into small acid-soluble oligonucleotides. The polypeptide is Exodeoxyribonuclease 7 small subunit (Rhodopseudomonas palustris (strain BisB5)).